The following is a 422-amino-acid chain: Immunoglobulin mu Fc receptor (422 aa).

A signal peptide spans 1–16; the sequence is MDFWLWLLYFLPVSGA. Topologically, residues 18–262 are extracellular; the sequence is RVLPEVQLNV…DRGLHIPIPE (245 aa). The Ig-like domain occupies 24–121; it reads QLNVEWGGSI…GKTQKITLNV (98 aa). Intrachain disulfides connect Cys-37-Cys-103 and Cys-49-Cys-58. Thr-91 is subject to Phosphothreonine. The chain crosses the membrane as a helical span at residues 263–283; that stretch reads FHILIPTFLGFLLLVLLGLVV. The Cytoplasmic portion of the chain corresponds to 284–422; sequence KRAIQRRRAS…YAPGPRSSCP (139 aa). Over residues 290-308 the composition is skewed to basic residues; sequence RRASSRRAGRLAMRRRGRG. Disordered stretches follow at residues 290–367 and 391–422; these read RRAS…QVLE and VNLE…SSCP. Residues 344–363 show a composition bias toward low complexity; sequence LGPAEAPLLNAPASASPASP.

As to quaternary structure, interacts (via Ig-like domain) with IGHM (via CH4/Cmu4 domain), both secreted and membrane-bound IgM; the interaction is glycan-independent and multivalent theoretically involving up to eight binding sites for the IgM pentamer. In terms of processing, phosphorylated on both Tyr and Ser residues. O-glycosylated. Sialylated. O-linked glycans regulate trafficking to the plasma membrane. Expressed in pre-B cells, immature and mature B cells residing in primary and secondary lymphoid organs (at protein level). In the spleen, highly expressed in follicular and marginal zone B cells and at lower levels in germinal center B cells and plasma cells. Expressed in splenic dendritic cells and in granulocytes. In the peritoneum, expressed in B1-a and B-2 cell lineages. In the bone marrow, expressed in immature B cells and at a lower level in pro- and pre-B cells (at protein level). Expressed in M cells (at protein level).

The protein resides in the cell membrane. It localises to the early endosome membrane. It is found in the golgi apparatus. Its subcellular location is the trans-Golgi network membrane. The protein localises to the lysosome membrane. High-affinity Fc receptor for immunoglobulin M (IgM), both secreted and membrane-bound IgM. Primarily regulates IgM transport and homeostasis. In lymphoid cells, enables exocytosis of membrane-bound IgM on the plasma membrane as well as endocytosis of IgM-antigen complexes toward lysosomes for degradation. In mucosal epithelium, mediates retrotranscytosis of antigen-IgM complexes across mucosal M cells toward antigen-presenting cells in mucosal lymphoid tissues. Triggers costimulatory signaling and mediates most of IgM effector functions involved in B cell development and primary immune response to infection. Likely limits tonic IgM BCR signaling to self-antigens for proper negative selection of autoreactive B cells in the bone marrow and for the maintenance of regulatory B cell pool in peripheral lymphoid organs. Mediates antibody responses to T cell-dependent and T cell-independent antigens and promotes induction of an efficient neutralizing IgG response. Engages in cross-talk with antigen-receptor signaling via the non-canonical NF-kappa-B, MAP kinases and calcium signaling pathways. The chain is Immunoglobulin mu Fc receptor from Mus musculus (Mouse).